Here is a 227-residue protein sequence, read N- to C-terminus: PKHD-type hydroxylase Swit_4046 (227 aa).

The Fe2OG dioxygenase domain occupies 78–178 (KVFPPLFNLY…RLCSFFWIQS (101 aa)). Fe cation-binding residues include His-96, Asp-98, and His-159. Residue Arg-169 participates in 2-oxoglutarate binding.

Fe(2+) serves as cofactor. It depends on L-ascorbate as a cofactor.

The polypeptide is PKHD-type hydroxylase Swit_4046 (Rhizorhabdus wittichii (strain DSM 6014 / CCUG 31198 / JCM 15750 / NBRC 105917 / EY 4224 / RW1) (Sphingomonas wittichii)).